The sequence spans 493 residues: Probable cytochrome P450 313a2 (493 aa).

Cys-438 provides a ligand contact to heme.

It belongs to the cytochrome P450 family. Requires heme as cofactor.

It is found in the endoplasmic reticulum membrane. It localises to the microsome membrane. Its function is as follows. May be involved in the metabolism of insect hormones and in the breakdown of synthetic insecticides. This is Probable cytochrome P450 313a2 (Cyp313a2) from Drosophila melanogaster (Fruit fly).